The chain runs to 544 residues: Chaperonin GroEL 2 (544 aa).

Residues 29-32 (TLGP), 86-90 (DGTTT), G413, 479-481 (NAA), and D495 each bind ATP.

The protein belongs to the chaperonin (HSP60) family. Forms a cylinder of 14 subunits composed of two heptameric rings stacked back-to-back. Interacts with the co-chaperonin GroES.

It localises to the cytoplasm. It catalyses the reaction ATP + H2O + a folded polypeptide = ADP + phosphate + an unfolded polypeptide.. In terms of biological role, together with its co-chaperonin GroES, plays an essential role in assisting protein folding. The GroEL-GroES system forms a nano-cage that allows encapsulation of the non-native substrate proteins and provides a physical environment optimized to promote and accelerate protein folding. The polypeptide is Chaperonin GroEL 2 (Prochlorococcus marinus (strain MIT 9313)).